The sequence spans 1141 residues: Tetratricopeptide repeat protein 17 (1141 aa).

One copy of the TPR 1 repeat lies at 295–328 (FTSYYTLGNIYAMLGEYNHSVLCYDHALQARPGF). The stretch at 340–382 (CQQKLEQKLEAQHRSLQRTLNELKEYQKQHDHYLRQQEILEKH) forms a coiled coil. TPR repeat units lie at residues 619–652 (WLIL…APLQ), 689–722 (PLTF…TTKC), 1014–1048 (SWVL…APHQ), 1051–1084 (DVPL…APHF), and 1085–1118 (AVNH…QPEF).

Belongs to the TTC17 family. As to quaternary structure, interacts with CATIP. Expressed in germ cells as well as in somatic cells of the testis (at protein level).

It is found in the cytoplasm. The protein localises to the cell membrane. It localises to the cytoskeleton. In terms of biological role, plays a role in primary ciliogenesis by modulating actin polymerization. This Homo sapiens (Human) protein is Tetratricopeptide repeat protein 17 (TTC17).